The sequence spans 460 residues: MLKILIPTLMLFPTIWFSPAKWLWTTSIAQSLVIALASLSWLKWSSETGWSSSNLYLATDPLSTPLLVLTCWLLPLMVLASQNHISPEPLNRQRTYISLLVSLQMFLILAFGATEIIMFYIMFEATLLPTLIIITRWGNQTERLNAGTYFLFYTLAGSLPLLVALLLLQNDSGTLSMFTLQYTQPMHLLTWGNKLWWAACLLAFLVKMPVYGVHLWLPKAHVEAPIAGSMILAAVLLKLGGYGMMRMMVMLDPLTKELAYPFIVLALWGIIMTGSICLRQTDLKSLIAYSSVGHMGLVAGGILIQTPWGFTGAIILMIAHGLASSALFCLANTSYERTHSRTMLLARGMQMILPLMTTWWFVASLANLALPPLPNLMGELMIITSMFNWSHWTLLLTGLGTLITASYSLYLFLMTQRGPLPSHIIALEPTHTREHLLITLHLIPIILLILKPELMWGWCF.

13 helical membrane-spanning segments follow: residues A20–L42, P61–S81, R94–A113, I117–N139, T148–L168, L195–L215, P225–M245, L258–L278, S285–I304, W308–L330, M351–P371, L394–M414, and L436–W456.

It belongs to the complex I subunit 4 family.

The protein resides in the mitochondrion membrane. It carries out the reaction a ubiquinone + NADH + 5 H(+)(in) = a ubiquinol + NAD(+) + 4 H(+)(out). Its function is as follows. Core subunit of the mitochondrial membrane respiratory chain NADH dehydrogenase (Complex I) that is believed to belong to the minimal assembly required for catalysis. Complex I functions in the transfer of electrons from NADH to the respiratory chain. The immediate electron acceptor for the enzyme is believed to be ubiquinone. This is NADH-ubiquinone oxidoreductase chain 4 (MT-ND4) from Salmo salar (Atlantic salmon).